Here is a 467-residue protein sequence, read N- to C-terminus: Membrane-bound acylglycerophosphatidylinositol O-acyltransferase mboat7 (467 aa).

Residues methionine 1–glutamate 5 are Cytoplasmic-facing. The helical transmembrane segment at leucine 6–phenylalanine 22 threads the bilayer. The Lumenal portion of the chain corresponds to arginine 23 to alanine 33. Residues alanine 34 to valine 57 form a helical membrane-spanning segment. The Cytoplasmic segment spans residues leucine 58–alanine 73. Residues leucine 74–glycine 93 traverse the membrane as a helical segment. Topologically, residues leucine 94–arginine 193 are lumenal. A helical membrane pass occupies residues leucine 194 to phenylalanine 211. Over proline 212–phenylalanine 230 the chain is Cytoplasmic. Residues phenylalanine 231–leucine 260 form a helical membrane-spanning segment. At glycine 261–tryptophan 421 the chain is on the lumenal side. N-linked (GlcNAc...) asparagine glycosylation is present at asparagine 316. Residues serine 422–methionine 442 traverse the membrane as a helical segment. Residues lysine 443–glutamate 467 lie on the Cytoplasmic side of the membrane. Positions lysine 447–glutamate 467 are disordered. The segment covering arginine 451 to glutamate 467 has biased composition (basic and acidic residues).

The protein belongs to the membrane-bound acyltransferase family.

It localises to the endoplasmic reticulum membrane. It carries out the reaction a 1-acyl-sn-glycero-3-phospho-(1D-myo-inositol) + (5Z,8Z,11Z,14Z)-eicosatetraenoyl-CoA = a 1-acyl-2-(5Z,8Z,11Z,14Z-eicosatetraenoyl)-sn-glycero-3-phospho-(1D-myo-inositol) + CoA. The catalysed reaction is (5Z,8Z,11Z,14Z)-eicosatetraenoyl-CoA + 1-hexadecanoyl-sn-glycero-3-phosphocholine = 1-hexadecanoyl-2-(5Z,8Z,11Z,14Z-eicosatetraenoyl)-sn-glycero-3-phosphocholine + CoA. It catalyses the reaction a 1-acyl-sn-glycero-3-phospho-(1D-myo-inositol) + an acyl-CoA = a 1,2-diacyl-sn-glycero-3-phospho-(1D-myo-inositol) + CoA. The enzyme catalyses 1-octadecanoyl-sn-glycero-3-phospho-(1D-myo-inositol) + (5Z,8Z,11Z,14Z)-eicosatetraenoyl-CoA = 1-octadecanoyl-2-(5Z,8Z,11Z,14Z-eicosatetraenoyl)-sn-glycero-3-phospho-(1D-myo-inositol) + CoA. The protein operates within lipid metabolism; phospholipid metabolism. Acyltransferase which catalyzes the transfer of an acyl group from an acyl-CoA to a lysophosphatidylinositol (1-acylglycerophosphatidylinositol or LPI) leading to the production of a phosphatidylinositol (1,2-diacyl-sn-glycero-3-phosphoinositol or PI) and participates in the reacylation step of the phospholipid remodeling pathway also known as the Lands cycle. Prefers arachidonoyl-CoA as the acyl donor, thus contributing to the regulation of free levels arachidonic acid in cell. The polypeptide is Membrane-bound acylglycerophosphatidylinositol O-acyltransferase mboat7 (mboat7) (Danio rerio (Zebrafish)).